The following is a 318-amino-acid chain: Acetyl-coenzyme A carboxylase carboxyl transferase subunit alpha (318 aa).

One can recognise a CoA carboxyltransferase C-terminal domain in the interval 31–292; sequence DLTNEIEKLE…NKTITKSLHA (262 aa).

Belongs to the AccA family. Acetyl-CoA carboxylase is a heterohexamer composed of biotin carboxyl carrier protein (AccB), biotin carboxylase (AccC) and two subunits each of ACCase subunit alpha (AccA) and ACCase subunit beta (AccD).

The protein localises to the cytoplasm. It carries out the reaction N(6)-carboxybiotinyl-L-lysyl-[protein] + acetyl-CoA = N(6)-biotinyl-L-lysyl-[protein] + malonyl-CoA. It participates in lipid metabolism; malonyl-CoA biosynthesis; malonyl-CoA from acetyl-CoA: step 1/1. Its function is as follows. Component of the acetyl coenzyme A carboxylase (ACC) complex. First, biotin carboxylase catalyzes the carboxylation of biotin on its carrier protein (BCCP) and then the CO(2) group is transferred by the carboxyltransferase to acetyl-CoA to form malonyl-CoA. The polypeptide is Acetyl-coenzyme A carboxylase carboxyl transferase subunit alpha (Listeria monocytogenes serotype 4a (strain HCC23)).